The primary structure comprises 432 residues: Pachytene checkpoint protein 2 homolog (432 aa).

Position 1 is an N-acetylmethionine (Met-1). 179–186 serves as a coordination point for ATP; that stretch reads GPPGTGKT.

This sequence belongs to the AAA ATPase family. PCH2 subfamily. Specifically interacts with the ligand binding domain of the thyroid receptor (TR). This interaction does not require the presence of thyroid hormone for its interaction. Interacts with proteasome subunit PSMA8; to participate in meiosis progression during spermatogenesis. Widely expressed, including in testis.

Its function is as follows. Plays a key role in chromosome recombination and chromosome structure development during meiosis. Required at early steps in meiotic recombination that leads to non-crossovers pathways. Also needed for efficient completion of homologous synapsis by influencing crossover distribution along the chromosomes affecting both crossovers and non-crossovers pathways. Also required for development of higher-order chromosome structures and is needed for synaptonemal-complex formation. In males, required for efficient synapsis of the sex chromosomes and for sex body formation. Promotes early steps of the DNA double-strand breaks (DSBs) repair process upstream of the assembly of RAD51 complexes. Required for depletion of HORMAD1 and HORMAD2 from synapsed chromosomes. Plays a role in mitotic spindle assembly checkpoint (SAC) activation. The protein is Pachytene checkpoint protein 2 homolog (Trip13) of Mus musculus (Mouse).